The sequence spans 462 residues: L-seryl-tRNA(Sec) selenium transferase (462 aa).

Lys292 bears the N6-(pyridoxal phosphate)lysine mark.

This sequence belongs to the SelA family. Pyridoxal 5'-phosphate is required as a cofactor.

It is found in the cytoplasm. It carries out the reaction L-seryl-tRNA(Sec) + selenophosphate + H(+) = L-selenocysteinyl-tRNA(Sec) + phosphate. Its pathway is aminoacyl-tRNA biosynthesis; selenocysteinyl-tRNA(Sec) biosynthesis; selenocysteinyl-tRNA(Sec) from L-seryl-tRNA(Sec) (bacterial route): step 1/1. Functionally, converts seryl-tRNA(Sec) to selenocysteinyl-tRNA(Sec) required for selenoprotein biosynthesis. This Geobacter sulfurreducens (strain ATCC 51573 / DSM 12127 / PCA) protein is L-seryl-tRNA(Sec) selenium transferase.